A 369-amino-acid polypeptide reads, in one-letter code: Peptidyl-prolyl cis-trans isomerase D (369 aa).

The 166-residue stretch at 8-173 (YFDLSIGGKP…ADVRIDACGI (166 aa)) folds into the PPIase cyclophilin-type domain. 3 TPR repeats span residues 218–251 (VEAVKAIGTAQLQAARFDVAVQKYAKAAGFLQEY), 269–302 (VAVHLNLALAALKAGNHQRVLSAASEVLHGAADD), and 306–339 (AKALYRRGLAYHHLKDPEMALTDLELAATYQPGD).

This sequence belongs to the cyclophilin-type PPIase family. PPIase D subfamily.

Its subcellular location is the cytoplasm. It catalyses the reaction [protein]-peptidylproline (omega=180) = [protein]-peptidylproline (omega=0). Its function is as follows. PPIases accelerate the folding of proteins. It catalyzes the cis-trans isomerization of proline imidic peptide bonds in oligopeptides. This chain is Peptidyl-prolyl cis-trans isomerase D (CPR6), found in Eremothecium gossypii (strain ATCC 10895 / CBS 109.51 / FGSC 9923 / NRRL Y-1056) (Yeast).